Here is a 308-residue protein sequence, read N- to C-terminus: MSQAKHVAVLKGGWSAEREVSLVSGKGCAEALRKHGYRVTEIDAGRDLADQILKVKPDVAFNALHGRWGEDGCVQGLLEILRVPYTHSGVLASALAMHKERAKFVFRAAGLPVAESVVVPREQAAHGHVMDPPYVIKPVSEGSSVGVFIVRAGDNRPPAELTSAEWNLGDEVMAERYIAGRELTCAVMGEEIFGVTEIIANTTFYDYEAKYQTGGSRHIIPAPIDADIYAEVQRVTLAAHKALGCRGVSRADFRFDDTRPGKPELILLEVNTQPGMTPTSLVPELANLAGYSYGELVSWMVEEASCDR.

Positions 103–302 (KFVFRAAGLP…YGELVSWMVE (200 aa)) constitute an ATP-grasp domain. 130 to 184 (MDPPYVIKPVSEGSSVGVFIVRAGDNRPPAELTSAEWNLGDEVMAERYIAGRELT) contributes to the ATP binding site. Positions 252, 269, and 271 each coordinate Mg(2+).

The protein belongs to the D-alanine--D-alanine ligase family. Mg(2+) is required as a cofactor. Mn(2+) serves as cofactor.

It is found in the cytoplasm. The catalysed reaction is 2 D-alanine + ATP = D-alanyl-D-alanine + ADP + phosphate + H(+). The protein operates within cell wall biogenesis; peptidoglycan biosynthesis. Its function is as follows. Cell wall formation. In Parvibaculum lavamentivorans (strain DS-1 / DSM 13023 / NCIMB 13966), this protein is D-alanine--D-alanine ligase.